A 258-amino-acid chain; its full sequence is Thiamine thiazole synthase (258 aa).

NAD(+) is bound by residues serine 36, 55–56 (ER), glycine 63, isoleucine 127, and 153–155 (HVD). Residues aspartate 155 and histidine 170 each coordinate Fe cation. Methionine 224 contributes to the NAD(+) binding site. Position 234 (arginine 234) interacts with glycine.

It belongs to the THI4 family. In terms of assembly, homooctamer; tetramer of dimers. Requires Fe(2+) as cofactor.

It catalyses the reaction hydrogen sulfide + glycine + NAD(+) = ADP-5-ethyl-4-methylthiazole-2-carboxylate + nicotinamide + 3 H2O + H(+). The protein operates within cofactor biosynthesis; thiamine diphosphate biosynthesis. Functionally, involved in the biosynthesis of the thiazole moiety of thiamine. Catalyzes the conversion of NAD and glycine to adenosine diphosphate 5-(2-hydroxyethyl)-4-methylthiazole-2-carboxylate (ADT), an adenylated thiazole intermediate, using free sulfide as a source of sulfur. This Methanothermobacter thermautotrophicus (strain ATCC 29096 / DSM 1053 / JCM 10044 / NBRC 100330 / Delta H) (Methanobacterium thermoautotrophicum) protein is Thiamine thiazole synthase.